The following is a 290-amino-acid chain: Acetyl-coenzyme A carboxylase carboxyl transferase subunit beta (290 aa).

In terms of domain architecture, CoA carboxyltransferase N-terminal spans isoleucine 28–aspartate 290. Zn(2+)-binding residues include cysteine 32, cysteine 35, cysteine 51, and cysteine 54. The segment at cysteine 32 to cysteine 54 adopts a C4-type zinc-finger fold.

This sequence belongs to the AccD/PCCB family. As to quaternary structure, acetyl-CoA carboxylase is a heterohexamer composed of biotin carboxyl carrier protein (AccB), biotin carboxylase (AccC) and two subunits each of ACCase subunit alpha (AccA) and ACCase subunit beta (AccD). It depends on Zn(2+) as a cofactor.

It is found in the cytoplasm. It carries out the reaction N(6)-carboxybiotinyl-L-lysyl-[protein] + acetyl-CoA = N(6)-biotinyl-L-lysyl-[protein] + malonyl-CoA. Its pathway is lipid metabolism; malonyl-CoA biosynthesis; malonyl-CoA from acetyl-CoA: step 1/1. In terms of biological role, component of the acetyl coenzyme A carboxylase (ACC) complex. Biotin carboxylase (BC) catalyzes the carboxylation of biotin on its carrier protein (BCCP) and then the CO(2) group is transferred by the transcarboxylase to acetyl-CoA to form malonyl-CoA. In Bacillus velezensis (strain DSM 23117 / BGSC 10A6 / LMG 26770 / FZB42) (Bacillus amyloliquefaciens subsp. plantarum), this protein is Acetyl-coenzyme A carboxylase carboxyl transferase subunit beta.